Here is a 183-residue protein sequence, read N- to C-terminus: Transmembrane protein 252 (183 aa).

Transmembrane regions (helical) follow at residues 8-28 and 39-59; these read ILCA…GFFI and LVVA…GIFW.

It is found in the membrane. The polypeptide is Transmembrane protein 252 (Tmem252) (Mus musculus (Mouse)).